The chain runs to 396 residues: Mitogen-activated protein kinase mpkC (396 aa).

Positions 20–299 constitute a Protein kinase domain; it reads YSDLQPVGLG…AAKALEHPYL (280 aa). Residues 26 to 34 and K49 contribute to the ATP site; that span reads VGLGAFGLV. D141 acts as the Proton acceptor in catalysis. T171 is subject to Phosphothreonine. Positions 171 to 173 match the TXY motif; the sequence is TGY. Y173 bears the Phosphotyrosine mark.

The protein belongs to the protein kinase superfamily. Ser/Thr protein kinase family. MAP kinase subfamily. HOG1 sub-subfamily. Mg(2+) serves as cofactor. Post-translationally, dually phosphorylated on Thr-171 and Tyr-173, which activates the enzyme.

It catalyses the reaction L-seryl-[protein] + ATP = O-phospho-L-seryl-[protein] + ADP + H(+). It carries out the reaction L-threonyl-[protein] + ATP = O-phospho-L-threonyl-[protein] + ADP + H(+). Its activity is regulated as follows. Activated by tyrosine and threonine phosphorylation. Mitogen-activated protein kinase required for growth on media where sorbitol or mannitol is the sole carbon source. The polypeptide is Mitogen-activated protein kinase mpkC (mpkC) (Aspergillus niger (strain ATCC MYA-4892 / CBS 513.88 / FGSC A1513)).